The sequence spans 436 residues: Phosphate-repressible acid phosphatase (436 aa).

The signal sequence occupies residues M1–A20. 3 N-linked (GlcNAc...) asparagine glycosylation sites follow: N227, N283, and N304.

Monomer.

It catalyses the reaction a phosphate monoester + H2O = an alcohol + phosphate. The protein is Phosphate-repressible acid phosphatase (pacA) of Aspergillus niger.